Here is an 863-residue protein sequence, read N- to C-terminus: DNA replication licensing factor mcm4 (863 aa).

Residues 1–121 (MSSPTSTPSR…ARQRPDLGSA (121 aa)) are disordered. 2 stretches are compositionally biased toward polar residues: residues 54-64 (SPSGDLQSPSG) and 78-99 (SALQSELDLSSPLTYGTPSSRV). The C4-type zinc finger occupies 306–331 (CQVCAFTTRVEIDRGRISEPSVCKHC). One can recognise an MCM domain in the interval 458–667 (IYERLASALA…YDRRLAHHLV (210 aa)). Positions 471, 497, 516, 517, 618, 643, 732, and 735 each coordinate ATP. The short motif at 642–645 (SRFD) is the Arginine finger element.

Belongs to the MCM family. In terms of assembly, component of the mcm2-7 complex (RLF-M). The complex forms a toroidal hexameric ring with the proposed subunit order mcm2-mcm6-mcm4-mcm7-mcm3-mcm5. The heterodimer of mmcm3/mcm5 interacts with mcm4, mmcm6, mcm7 and weakly with mcm2. Component of the CMG helicase complex, composed of the mcm2-7 complex, the GINS complex and cdc45. Hyperphosphorylated during mitosis in a mechanism requiring cdc2-cyclin B and other kinases. Undergoes dephosphorylation after exiting mitosis, existing in a partially phosphorylated state in the cytosolic interphase mcm complex which associates with the pre-replication complexes (pre-Rcs). Complete dephosphorylation inactivates the mcm complex, preventing its binding to chromatin. Becomes actively phosphorylated during S phase once the mcm complex is assembled on the chromatin. This chromatin-associated phosphorylation occurs during the activation of the pre-Rcs and is independent of cdks. Phosphorylated by the cdc7-dbf4b complex.

The protein localises to the nucleus. It is found in the chromosome. It catalyses the reaction ATP + H2O = ADP + phosphate + H(+). In terms of biological role, acts as a component of the MCM2-7 complex (MCM complex) which is the replicative helicase essential for 'once per cell cycle' DNA replication initiation and elongation in eukaryotic cells. Core component of CDC45-MCM-GINS (CMG) helicase, the molecular machine that unwinds template DNA during replication, and around which the replisome is built. The active ATPase sites in the MCM2-7 ring are formed through the interaction surfaces of two neighboring subunits such that a critical structure of a conserved arginine finger motif is provided in trans relative to the ATP-binding site of the Walker A box of the adjacent subunit. The six ATPase active sites, however, are likely to contribute differentially to the complex helicase activity. In Xenopus tropicalis (Western clawed frog), this protein is DNA replication licensing factor mcm4.